A 413-amino-acid chain; its full sequence is Terephthalate 1,2-dioxygenase, terminal oxygenase component subunit alpha 2 (413 aa).

The 104-residue stretch at 41 to 144 (NYLCLESEIP…CKEEHGPRKL (104 aa)) folds into the Rieske domain. Positions 82, 84, 102, and 105 each coordinate [2Fe-2S] cluster.

Belongs to the bacterial ring-hydroxylating dioxygenase alpha subunit family. Heterotetramer composed of 2 alpha (TphA2I and TphA2II) and 2 beta (TphA3I and TphA3II) subunits. Part of a multicomponent enzyme system composed of a reductase (TphA1I or TphA1II) and a two-subunit oxygenase component (TphA2I or TphA2II and TphA3I or TphA3II). Requires Fe cation as cofactor. The cofactor is [2Fe-2S] cluster.

It catalyses the reaction terephthalate + NADH + O2 + H(+) = (3S,4R)-3,4-dihydroxycyclohexa-1,5-diene-1,4-dicarboxylate + NAD(+). With respect to regulation, inhibited by EDTA. Functionally, component of the terephthalate 1,2-dioxygenase multicomponent enzyme system which catalyzes the dioxygenation of terephthalate (TER/TPA) to 1,2-dihydroxy-3,5-cyclohexadiene-1,4-dicarboxylic acid (DCD). It can also use 2,5-dicarboxypyridine (PDC) and 1,4-napthalenedicarboxylic acid (NDC) as substrates, and preferentially uses NADPH which is the physiological electron donor. The chain is Terephthalate 1,2-dioxygenase, terminal oxygenase component subunit alpha 2 (tphA2II) from Comamonas sp.